The sequence spans 404 residues: MSPSDVPINWKRNLTVTWLGCFLTGAAFSLVMPFLPLYVEQLGVTGHSALNMWSGLVFSITFLFSAIASPFWGGLADRKGRKIMLLRSALGMAIVMLLMGMAQNIWQFLILRALLGLLGGFILNANALIATQVPRHKSGWALGTLSTGGVSGALLGPLAGGLLADHYGLRPVFFITASVLFICFLLTFFFIRENFLPVSKKEMLHVREVVASLKNPRLVLSLFVTTLIIQVATGSIAPILTLYVRELAGNVSNIAFISGMIASVPGVAALLSAPRLGKLGDRIGPEKILIVALIISVLLLIPMSFVQTPWQLALLRFLLGAADGALLPAVQTLLVYNSTNQIAGRIFSYNQSFRDIGNVTGPLMGAAISASYGFRAVFCVTAGVVLFNAIYSWNSLRRRRLAIE.

11 helical membrane-spanning segments follow: residues 19 to 39, 56 to 76, 90 to 110, 113 to 133, 144 to 164, 171 to 191, 222 to 242, 254 to 274, 288 to 308, 317 to 337, and 376 to 396; these read LGCFLTGAAFSLVMPFLPLYV, LVFSITFLFSAIASPFWGGLA, LGMAIVMLLMGMAQNIWQFLI, ALLGLLGGFILNANALIATQV, TLSTGGVSGALLGPLAGGLLA, PVFFITASVLFICFLLTFFFI, LFVTTLIIQVATGSIAPILTL, IAFISGMIASVPGVAALLSAP, ILIVALIISVLLLIPMSFVQT, FLLGAADGALLPAVQTLLVYN, and AVFCVTAGVVLFNAIYSWNSL.

It belongs to the major facilitator superfamily. DHA1 family. MdtG (TC 2.A.1.2.20) subfamily.

It localises to the cell inner membrane. This is Multidrug resistance protein MdtG from Salmonella choleraesuis (strain SC-B67).